Consider the following 983-residue polypeptide: Glycine dehydrogenase (decarboxylating) (983 aa).

Residue K726 is modified to N6-(pyridoxal phosphate)lysine.

The protein belongs to the GcvP family. In terms of assembly, the glycine cleavage system is composed of four proteins: P, T, L and H. The cofactor is pyridoxal 5'-phosphate.

It carries out the reaction N(6)-[(R)-lipoyl]-L-lysyl-[glycine-cleavage complex H protein] + glycine + H(+) = N(6)-[(R)-S(8)-aminomethyldihydrolipoyl]-L-lysyl-[glycine-cleavage complex H protein] + CO2. Its function is as follows. The glycine cleavage system catalyzes the degradation of glycine. The P protein binds the alpha-amino group of glycine through its pyridoxal phosphate cofactor; CO(2) is released and the remaining methylamine moiety is then transferred to the lipoamide cofactor of the H protein. This is Glycine dehydrogenase (decarboxylating) from Synechocystis sp. (strain ATCC 27184 / PCC 6803 / Kazusa).